We begin with the raw amino-acid sequence, 442 residues long: METMDTSVDLPGRWIDIEKIIKRTGPFASPSFEPDTKASPNIMNGLQNDFKVLVIGAGGLGCEILKNLALSGFRNIDVIDMDTIDISNLNRQFLFRRKDVGKSKAEVAAAFINSRITGCNVTPHKCRIQDKDEDYYRQFKIVIAGLDSIEARRWINGLLVNLVVVNDSGDIEPDTIIPLVDGGTEGFKGQARVILPKISSCFECSLDAFPPQVSYAICTIANTPRVPEHCIQWALLFGLQDATLEKPFDPKQFDNDNPDHMNWLFECAKKRAEKFNINGVTYKLTQGVAKNIIPAIASTNAIIAAACCNEVFKFCTDSSGYLNNYMMYNGLNGVYTFTFEYEIKEGCAVCGTNLVTFEIDKSNTLSTFLEKITTDSRFQFKKPSLRSNGRNLYMQGLLHQSTVPNLEKTLSELNVQEDDEITITDPALPGNLAVRMRIKYTS.

Residues 80-104 (DMDTIDISNLNRQFLFRRKDVGKSK) and 128-151 (IQDKDEDYYRQFKIVIAGLDSIEA) contribute to the ATP site. Catalysis depends on Cys218, which acts as the Glycyl thioester intermediate.

This sequence belongs to the ubiquitin-activating E1 family. UBA3 subfamily. In terms of assembly, heterodimer of uba3 and nae1. The complex binds nedd8 and ube2m.

The enzyme catalyses ATP + [NEDD8 protein] + [E1 NEDD8-activating enzyme]-L-cysteine = AMP + diphosphate + [E1 NEDD8-activating enzyme]-S-[NEDD8 protein]-yl-L-cysteine.. Its pathway is protein modification; protein neddylation. Functionally, regulatory subunit of the dimeric uba3-nae1 E1 enzyme. E1 activates nedd8 by first adenylating its C-terminal glycine residue with ATP, thereafter linking this residue to the side chain of the catalytic cysteine, yielding a nedd8-uba3 thioester and free AMP. E1 finally transfers nedd8 to the catalytic cysteine of ube2m. This Dictyostelium discoideum (Social amoeba) protein is NEDD8-activating enzyme E1 catalytic subunit (uba3).